Reading from the N-terminus, the 520-residue chain is Solute carrier family 2, facilitated glucose transporter member 14 (520 aa).

Topologically, residues 1 to 29 (MEFHNGGHVSGIGGFLVSLTSRMKPHTLA) are cytoplasmic. A helical membrane pass occupies residues 30–50 (VTPALIFAITVATIGSFQFGY). Residues 51-88 (NTGVINAPETIIKEFINKTLTDKANAPPSEVLLTNLWS) lie on the Extracellular side of the membrane. N67 carries N-linked (GlcNAc...) asparagine glycosylation. A helical membrane pass occupies residues 89–109 (LSVAIFSVGGMIGSFSVGLFV). At 110–117 (NRFGRRNS) the chain is on the cytoplasmic side. A helical transmembrane segment spans residues 118–138 (MLIVNLLAATGGCLMGLCKIA). The Extracellular segment spans residues 139 to 148 (ESVEMLILGR). The chain crosses the membrane as a helical span at residues 149-169 (LVIGLFCGLCTGFVPMYIGEI). The Cytoplasmic portion of the chain corresponds to 170–177 (SPTALRGA). Residues 178-198 (FGTLNQLGIVIGILVAQIFGL) traverse the membrane as a helical segment. D-glucose is bound at residue Q183. Over 199 to 207 (ELILGSEEL) the chain is Extracellular. The helical transmembrane segment at 208 to 228 (WPVLLGFTILPAILQSAALPC) threads the bilayer. Over 229–293 (CPESPRFLLI…LFRVSSYRQP (65 aa)) the chain is Cytoplasmic. A helical membrane pass occupies residues 294 to 314 (IIISIVLQLSQQLSGINAVFY). Residues 304–305 (QQ) and N310 each bind D-glucose. The Extracellular segment spans residues 315–328 (YSTGIFKDAGVQQP). Residues 329–349 (IYATISAGVVNTIFTLLSLFL) form a helical membrane-spanning segment. N339 lines the D-glucose pocket. The Cytoplasmic segment spans residues 350 to 358 (VERAGRRTL). Residues 359-379 (HMIGLGGMAFCSTLMTVSLLL) traverse the membrane as a helical segment. The Extracellular portion of the chain corresponds to 380–392 (KNHYNGMSFVCIG). Residues 393-413 (AILVFVACFEIGPGPIPWFIV) traverse the membrane as a helical segment. E402 and W410 together coordinate D-glucose. Residues 414-423 (AELFSQGPRP) lie on the Cytoplasmic side of the membrane. The helical transmembrane segment at 424–444 (AAMAVAGCSNWTSNFLVGLLF) threads the bilayer. The Extracellular portion of the chain corresponds to 445-451 (PSAAYYL). Residues 452–472 (GAYVFIIFTGFLITFLAFTFF) form a helical membrane-spanning segment. Topologically, residues 473 to 520 (KVPETRGRTFEDITRAFEGQAHGADRSGKDGVMGMNSIEPAKETTTNV) are cytoplasmic. Positions 493-520 (AHGADRSGKDGVMGMNSIEPAKETTTNV) are disordered.

This sequence belongs to the major facilitator superfamily. Sugar transporter (TC 2.A.1.1) family. Glucose transporter subfamily. Mainly expressed in testis. Also expressed in small intestine, liver and kidney.

The protein localises to the cell membrane. It carries out the reaction D-glucose(out) = D-glucose(in). The catalysed reaction is L-dehydroascorbate(out) = L-dehydroascorbate(in). Its function is as follows. Hexose transporter that can mediate the transport of glucose and dehydroascorbate across the cell membrane. In Homo sapiens (Human), this protein is Solute carrier family 2, facilitated glucose transporter member 14.